Reading from the N-terminus, the 77-residue chain is U8-lycotoxin-Ls1o (77 aa).

The first 20 residues, 1-20 (MKLMIFTGLVLFAIVSLIEA), serve as a signal peptide directing secretion. Positions 21-26 (QAENGK) are excised as a propeptide.

Belongs to the neurotoxin 19 (CSTX) family. 08 (U8-Lctx) subfamily. In terms of processing, contains 4 disulfide bonds. In terms of tissue distribution, expressed by the venom gland.

The protein resides in the secreted. The protein is U8-lycotoxin-Ls1o of Lycosa singoriensis (Wolf spider).